Here is a 238-residue protein sequence, read N- to C-terminus: Ribonuclease PH (238 aa).

Residues Arg86 and 124–126 contribute to the phosphate site; that span reads GTR.

Belongs to the RNase PH family. Homohexameric ring arranged as a trimer of dimers.

The catalysed reaction is tRNA(n+1) + phosphate = tRNA(n) + a ribonucleoside 5'-diphosphate. Phosphorolytic 3'-5' exoribonuclease that plays an important role in tRNA 3'-end maturation. Removes nucleotide residues following the 3'-CCA terminus of tRNAs; can also add nucleotides to the ends of RNA molecules by using nucleoside diphosphates as substrates, but this may not be physiologically important. Probably plays a role in initiation of 16S rRNA degradation (leading to ribosome degradation) during starvation. The sequence is that of Ribonuclease PH from Histophilus somni (strain 129Pt) (Haemophilus somnus).